The following is a 232-amino-acid chain: MRLPTPLYPGTLVRRYQRFLADVQLADGTIVTAHCPNSGSMKGCNLPGSLVWLSKSTNPARKLAYTWELVMADGFWAGINTGLPNRLVREAIEDGTVTELQGYGSIRPEVRYGEERSRIDLLLEGEPGRCWVEVKNVTLVEGERALFPDAVTERGQKHLRELMEMVRRGDRGVIFYVVQRGDGEAVSPADAIDPKYGQLLRLAVANGVEALAYRALVTPEEIRLTERLPVIL.

The protein belongs to the SfsA family.

The protein is Sugar fermentation stimulation protein homolog of Geobacter metallireducens (strain ATCC 53774 / DSM 7210 / GS-15).